Here is a 696-residue protein sequence, read N- to C-terminus: Potassium voltage-gated channel subfamily KQT member 4 (696 aa).

The segment at 1-20 is disordered; the sequence is MAEAPPRRLGLGPPPGDAPR. At 1–97 the chain is on the cytoplasmic side; it reads MAEAPPRRLG…VYNVLERPRG (97 aa). Residue Arg94 participates in a 1,2-diacyl-sn-glycero-3-phospho-(1D-myo-inositol-4,5-bisphosphate) binding. Residues 98-119 traverse the membrane as a helical segment; it reads WAFVYHVFIFLLVFSCLVLSVL. Residues 120–130 are Extracellular-facing; the sequence is STIQEHQELAN. A helical membrane pass occupies residues 131–153; that stretch reads ECLLILEFVMIVVFGLEYIIRVW. Residues 154–169 are Cytoplasmic-facing; sequence SAGCCCRYRGWQGRFR. Residues 170–192 form a helical membrane-spanning segment; it reads FARKPFCVIDFIVFVASVAVIAA. Lys173 lines the a 1,2-diacyl-sn-glycero-3-phospho-(1D-myo-inositol-4,5-bisphosphate) pocket. Residues 193–203 lie on the Extracellular side of the membrane; that stretch reads GTQGNIFATSA. Residues 204 to 224 form a helical; Voltage-sensor membrane-spanning segment; it reads LRSMRFLQILRMVRMDRRGGT. The a 1,2-diacyl-sn-glycero-3-phospho-(1D-myo-inositol-4,5-bisphosphate) site is built by Arg220, Arg221, Lys226, and Ser236. The Cytoplasmic portion of the chain corresponds to 225–236; the sequence is WKLLGSVVYAHS. Residues 237–259 form a helical membrane-spanning segment; that stretch reads KELITAWYIGFLVLIFASFLVYL. Residues 260-271 lie on the Extracellular side of the membrane; the sequence is AEKDANSDFSSY. The segment at residues 272–293 is an intramembrane region (pore-forming); it reads ADSLWWGTITLTTIGYGDKTPH. Residue Thr294 is a topological domain, extracellular. The chain crosses the membrane as a helical span at residues 295-323; that stretch reads WLGRVLAAGFALLGISFFALPAGILGSGF. Residues 324–696 are Cytoplasmic-facing; that stretch reads ALKVQEQHRQ…ISRSVSTNMD (373 aa). A 1,2-diacyl-sn-glycero-3-phospho-(1D-myo-inositol-4,5-bisphosphate) is bound by residues His331 and Lys334. The tract at residues 343–352 is interaction with CALM; that stretch reads AANLIQAAWR. The disordered stretch occupies residues 445–484; the sequence is SSQKRTGPSKQHLAPPPIPTSPSSEQVGEASSPSKVQKSW. Residues 465 to 484 are compositionally biased toward polar residues; the sequence is SPSSEQVGEASSPSKVQKSW. Residues 536-550 are interaction with CALM; the sequence is RSVRILKFLVAKRKF. The tract at residues 547–651 is C-terminal assembly domain (tetramerization); sequence KRKFKETLRP…SRCLRSGTSA (105 aa). Residues 589-609 are disordered; it reads GRGPGDRKTREKGDKGPSDTE. Positions 592–606 are enriched in basic and acidic residues; the sequence is PGDRKTREKGDKGPS. A coiled-coil region spans residues 610 to 645; the sequence is AVDEISMMGRVVKVEKQVQSIEHKLDLLLGFYSRCL.

The protein belongs to the potassium channel family. KQT (TC 1.A.1.15) subfamily. Kv7.4/KCNQ4 sub-subfamily. As to quaternary structure, homotetramer. Interacts (via C-terminus) with calmodulin; forms a heterooctameric structure (with 4:4 KCNQ1:CALM stoichiometry); the interaction is calcium-independent, constitutive, participates in the proper assembly of a functional channel. The interaction with calcium-free CALM controls channel trafficking whereas interaction with calcium-bound CALM regulates channel gating. May form a functional heteromultimeric channel with KCNQ3. Interacts with HSP90AB1; promotes cell surface expression of KCNQ4. As to expression, in the inner ear expressed in the outer sensory hair cells of the cochlea and in type I hair cells of the vestibular organs. Also expressed in the postsynaptic membrane of the calyx nerve endings innervating type I cells. In the brain expressed in neurons of many, but not all, nuclei of the central auditory pathway. Absent from most other brain regions.

The protein resides in the basal cell membrane. It carries out the reaction K(+)(in) = K(+)(out). Two molecules of phosphatidylinositol-4,5-bisphosphate (PIP2-I and PIP2-II) are essential to activate KCNQ4 channel by inducing the coupling of the voltage-sensing domain (VSD) and the pore-forming domain (PD). Upon channel activation, PIP2-I and PIP2-II disrupt the VSD-calmodulin/CALM interaction, causing the release of CALM from the VSD which triggers the opening of the gate. Calcium suppresses KCNQ4 channel current through calcium-bound CALM C-terminus. Therefore CALM acts as calcium sensor that controls channel activity. Pore-forming subunit of the voltage-gated potassium (Kv) channel involved in the regulation of sensory cells excitability in the cochlea. KCNQ4/Kv7.4 channel is composed of 4 pore-forming subunits assembled as tetramers. Promotes the outflow of potassium ions in the repolarization phase of action potential which plays a role in regulating membrane potential of excitable cells. The channel conducts a slowly activating and deactivating current. Current often shows some inward rectification at positive potentials. Channel may be selectively permeable in vitro to other cations besides potassium, in decreasing order of affinity K(+) = Rb(+) &gt; Cs(+) &gt; Na(+). Important for normal physiological function of inner ear such as sensory perception of sound. In Mus musculus (Mouse), this protein is Potassium voltage-gated channel subfamily KQT member 4.